We begin with the raw amino-acid sequence, 265 residues long: UPF0354 protein ABC2771 (265 aa).

The protein belongs to the UPF0354 family.

The polypeptide is UPF0354 protein ABC2771 (Shouchella clausii (strain KSM-K16) (Alkalihalobacillus clausii)).